The chain runs to 110 residues: Dermcidin (110 aa).

The first 19 residues, 1–19 (MRFMTLLFLTALAGALVCA), serve as a signal peptide directing secretion. The segment at 24–70 (AASAPGSGNPCHEASAAQKENAGEDPGLARQAPKPRKQRSSLLEKGL) is disordered. 2 O-linked (Xyl...) (chondroitin sulfate) serine glycosylation sites follow: Ser-30 and Ser-38. A propeptide spanning residues 50–62 (GLARQAPKPRKQR) is cleaved from the precursor. A helical transmembrane segment spans residues 64 to 108 (SLLEKGLDGAKKAVGGLGKLGKDAVEDLESVGKGAVHDVKDVLDS). Glu-67 provides a ligand contact to Zn(2+). At Lys-68 the chain carries N6-acetyllysine. Positions 71, 86, 90, 100, and 104 each coordinate Zn(2+). A propeptide is located at residue Leu-110.

Homohexamer. The cofactor is Mn(2+). It depends on Zn(2+) as a cofactor. In terms of tissue distribution, detected in urine (at protein level). Constitutively expressed in eccrine sweat gland cells (at protein level). Secreted into the sweat at a concentration of 1-10 micrograms/ml.

The protein localises to the secreted. It localises to the membrane. In terms of biological role, found in sweat, has an antimicrobial activity during early bacterial colonization. The secreted peptide assembles into homohexameric complexes that can associate with and also insert into pathogen membranes. Once inserted in bacteria membranes forms anion channels probably altering the transmembrane potential essential for bacterial survival. Highly effective against E.coli, E.faecalis, S.aureus and C.albicans. Optimal pH and salt concentration resemble the conditions in sweat. Also exhibits proteolytic activity, cleaving on the C-terminal side of Arg and, to a lesser extent, Lys residues. Promotes survival of neurons and displays phosphatase activity. It may bind IgG. In Homo sapiens (Human), this protein is Dermcidin.